The chain runs to 317 residues: Nucleoside ABC transporter permease protein NupC (317 aa).

A run of 10 helical transmembrane segments spans residues Ile9–Val29, Gly35–Phe55, Met62–Phe82, Ile98–Val118, Gly132–Thr151, Leu155–Phe172, Ala203–Ile223, Gly225–Phe245, Ile251–Gly271, and Met286–Pro306.

This sequence belongs to the binding-protein-dependent transport system permease family. As to quaternary structure, the complex is composed of two ATP-binding proteins (NupA), two transmembrane proteins (NupB and NupC) and a solute-binding protein (BmpA).

It localises to the cell membrane. Part of an ABC transporter complex involved in the uptake of all common nucleosides. Responsible for the translocation of the substrate across the membrane. The chain is Nucleoside ABC transporter permease protein NupC from Lactococcus lactis subsp. cremoris (strain MG1363).